The chain runs to 228 residues: uncharacterized protein (228 aa).

To E.coli YbfG.

This is an uncharacterized protein from Haemophilus influenzae (strain ATCC 51907 / DSM 11121 / KW20 / Rd).